Here is a 297-residue protein sequence, read N- to C-terminus: Polyhedral envelope protein (297 aa).

This sequence belongs to the baculoviridae PE family.

It localises to the virion membrane. In terms of biological role, major component of the polyhedra envelope. In Orgyia pseudotsugata (Douglas-fir tussock moth), this protein is Polyhedral envelope protein.